Consider the following 217-residue polypeptide: ATP phosphoribosyltransferase (217 aa).

It belongs to the ATP phosphoribosyltransferase family. Short subfamily. As to quaternary structure, heteromultimer composed of HisG and HisZ subunits.

It localises to the cytoplasm. It catalyses the reaction 1-(5-phospho-beta-D-ribosyl)-ATP + diphosphate = 5-phospho-alpha-D-ribose 1-diphosphate + ATP. It participates in amino-acid biosynthesis; L-histidine biosynthesis; L-histidine from 5-phospho-alpha-D-ribose 1-diphosphate: step 1/9. In terms of biological role, catalyzes the condensation of ATP and 5-phosphoribose 1-diphosphate to form N'-(5'-phosphoribosyl)-ATP (PR-ATP). Has a crucial role in the pathway because the rate of histidine biosynthesis seems to be controlled primarily by regulation of HisG enzymatic activity. The chain is ATP phosphoribosyltransferase from Synechococcus sp. (strain WH7803).